The chain runs to 88 residues: MIASSIKAAVVKDNARQPGDTGSPEVQVALLTARINELMPHFKTHAKDHHGRRGLLRMVSRRRKLLDYLKSKDAERYIALIAKLGLRK.

Belongs to the universal ribosomal protein uS15 family. Part of the 30S ribosomal subunit. Forms a bridge to the 50S subunit in the 70S ribosome, contacting the 23S rRNA.

Functionally, one of the primary rRNA binding proteins, it binds directly to 16S rRNA where it helps nucleate assembly of the platform of the 30S subunit by binding and bridging several RNA helices of the 16S rRNA. Forms an intersubunit bridge (bridge B4) with the 23S rRNA of the 50S subunit in the ribosome. This is Small ribosomal subunit protein uS15 from Albidiferax ferrireducens (strain ATCC BAA-621 / DSM 15236 / T118) (Rhodoferax ferrireducens).